Here is a 287-residue protein sequence, read N- to C-terminus: 4-hydroxybenzoate octaprenyltransferase (287 aa).

The next 6 helical transmembrane spans lie at 23–40, 98–118, 141–161, 163–183, 213–233, and 235–255; these read IGSL…WLAG, ILFV…NKMT, LPQF…YAAV, ESLP…TVAY, IIIG…GNIT, and LGIP…YQQI.

Belongs to the UbiA prenyltransferase family. The cofactor is Mg(2+).

The protein localises to the cell inner membrane. It catalyses the reaction all-trans-octaprenyl diphosphate + 4-hydroxybenzoate = 4-hydroxy-3-(all-trans-octaprenyl)benzoate + diphosphate. Its pathway is cofactor biosynthesis; ubiquinone biosynthesis. Its function is as follows. Catalyzes the prenylation of para-hydroxybenzoate (PHB) with an all-trans polyprenyl group. Mediates the second step in the final reaction sequence of ubiquinone-8 (UQ-8) biosynthesis, which is the condensation of the polyisoprenoid side chain with PHB, generating the first membrane-bound Q intermediate 3-octaprenyl-4-hydroxybenzoate. The polypeptide is 4-hydroxybenzoate octaprenyltransferase (Pectobacterium atrosepticum (strain SCRI 1043 / ATCC BAA-672) (Erwinia carotovora subsp. atroseptica)).